Reading from the N-terminus, the 272-residue chain is Probable feruloyl esterase C (272 aa).

The signal sequence occupies residues 1 to 22; sequence MVPTIIYSAILALSAFTPSVFA.

The protein belongs to the faeC family.

The protein localises to the secreted. It carries out the reaction feruloyl-polysaccharide + H2O = ferulate + polysaccharide.. Involved in degradation of plant cell walls. Hydrolyzes the feruloyl-arabinose ester bond in arabinoxylans, and the feruloyl-galactose ester bond in pectin. Active against paranitrophenyl-acetate, methyl ferulate and wheat arabinoxylan. The protein is Probable feruloyl esterase C (faeC) of Aspergillus fumigatus (strain ATCC MYA-4609 / CBS 101355 / FGSC A1100 / Af293) (Neosartorya fumigata).